We begin with the raw amino-acid sequence, 389 residues long: Carbamoyl phosphate synthase small chain (389 aa).

The tract at residues 1–199 is CPSase; it reads MFNPAILVLA…AGKPFNLQTT (199 aa). The L-glutamine site is built by Ser-50, Gly-251, and Gly-253. Residues 203-389 enclose the Glutamine amidotransferase type-1 domain; sequence HVVAYDFGIK…FINAVQATKA (187 aa). Cys-279 acts as the Nucleophile in catalysis. L-glutamine-binding residues include Leu-280, Gln-283, Asn-321, Gly-323, and Phe-324. Residues His-363 and Glu-365 contribute to the active site.

Belongs to the CarA family. Composed of two chains; the small (or glutamine) chain promotes the hydrolysis of glutamine to ammonia, which is used by the large (or ammonia) chain to synthesize carbamoyl phosphate. Tetramer of heterodimers (alpha,beta)4.

The catalysed reaction is hydrogencarbonate + L-glutamine + 2 ATP + H2O = carbamoyl phosphate + L-glutamate + 2 ADP + phosphate + 2 H(+). The enzyme catalyses L-glutamine + H2O = L-glutamate + NH4(+). The protein operates within amino-acid biosynthesis; L-arginine biosynthesis; carbamoyl phosphate from bicarbonate: step 1/1. Its pathway is pyrimidine metabolism; UMP biosynthesis via de novo pathway; (S)-dihydroorotate from bicarbonate: step 1/3. Functionally, small subunit of the glutamine-dependent carbamoyl phosphate synthetase (CPSase). CPSase catalyzes the formation of carbamoyl phosphate from the ammonia moiety of glutamine, carbonate, and phosphate donated by ATP, constituting the first step of 2 biosynthetic pathways, one leading to arginine and/or urea and the other to pyrimidine nucleotides. The small subunit (glutamine amidotransferase) binds and cleaves glutamine to supply the large subunit with the substrate ammonia. This is Carbamoyl phosphate synthase small chain from Haemophilus ducreyi (strain 35000HP / ATCC 700724).